Consider the following 391-residue polypeptide: Processive diacylglycerol beta-glucosyltransferase (391 aa).

Belongs to the glycosyltransferase 28 family. UgtP subfamily.

It is found in the cell membrane. It carries out the reaction a 1,2-diacyl-3-O-(beta-D-glucopyranosyl)-sn-glycerol + UDP-alpha-D-glucose = a 1,2-diacyl-3-O-(beta-D-Glc-(1-&gt;6)-beta-D-Glc)-sn-glycerol + UDP + H(+). The enzyme catalyses a 1,2-diacyl-sn-glycerol + UDP-alpha-D-glucose = a 1,2-diacyl-3-O-(beta-D-glucopyranosyl)-sn-glycerol + UDP + H(+). The protein operates within glycolipid metabolism; diglucosyl-diacylglycerol biosynthesis. In terms of biological role, processive glucosyltransferase involved in the biosynthesis of both the bilayer- and non-bilayer-forming membrane glucolipids. Is able to successively transfer two glucosyl residues to diacylglycerol (DAG), thereby catalyzing the formation of beta-monoglucosyl-DAG (3-O-(beta-D-glucopyranosyl)-1,2-diacyl-sn-glycerol) and beta-diglucosyl-DAG (3-O-(beta-D-glucopyranosyl-beta-(1-&gt;6)-D-glucopyranosyl)-1,2-diacyl-sn-glycerol). Beta-diglucosyl-DAG is the predominant glycolipid found in Bacillales and is also used as a membrane anchor for lipoteichoic acid (LTA). The polypeptide is Processive diacylglycerol beta-glucosyltransferase (Staphylococcus aureus (strain bovine RF122 / ET3-1)).